We begin with the raw amino-acid sequence, 267 residues long: 3-methyl-2-oxobutanoate hydroxymethyltransferase (267 aa).

Mg(2+)-binding residues include D46 and D85. 3-methyl-2-oxobutanoate contacts are provided by residues 46–47 (DS), D85, and K115. E117 is a Mg(2+) binding site. The Proton acceptor role is filled by E184.

It belongs to the PanB family. As to quaternary structure, homodecamer; pentamer of dimers. Requires Mg(2+) as cofactor.

It is found in the cytoplasm. It carries out the reaction 3-methyl-2-oxobutanoate + (6R)-5,10-methylene-5,6,7,8-tetrahydrofolate + H2O = 2-dehydropantoate + (6S)-5,6,7,8-tetrahydrofolate. The protein operates within cofactor biosynthesis; (R)-pantothenate biosynthesis; (R)-pantoate from 3-methyl-2-oxobutanoate: step 1/2. Catalyzes the reversible reaction in which hydroxymethyl group from 5,10-methylenetetrahydrofolate is transferred onto alpha-ketoisovalerate to form ketopantoate. The polypeptide is 3-methyl-2-oxobutanoate hydroxymethyltransferase (Geotalea daltonii (strain DSM 22248 / JCM 15807 / FRC-32) (Geobacter daltonii)).